Here is a 216-residue protein sequence, read N- to C-terminus: Large ribosomal subunit protein uL3 (216 aa).

Gln-153 carries the N5-methylglutamine modification.

The protein belongs to the universal ribosomal protein uL3 family. Part of the 50S ribosomal subunit. Forms a cluster with proteins L14 and L19. In terms of processing, methylated by PrmB.

Functionally, one of the primary rRNA binding proteins, it binds directly near the 3'-end of the 23S rRNA, where it nucleates assembly of the 50S subunit. The chain is Large ribosomal subunit protein uL3 from Burkholderia ambifaria (strain MC40-6).